A 691-amino-acid chain; its full sequence is Menaquinone reductase, molybdopterin-binding-like subunit (691 aa).

The segment at residues 1–27 (MALDRRGFLKFIGGATAGILATPVVWK) is a signal peptide (tat-type signal). The 4Fe-4S Mo/W bis-MGD-type domain maps to 50-106 (NSYVPTVSKLCPTGIGVRVRLVDGRPVRVIGNPEHPLSKGGVSSIAAAEVQMLYSPA).

Belongs to the prokaryotic molybdopterin-containing oxidoreductase family. The Qrc complex is composed of four subunits: QrcA, QrcB, QrcC and QrcD. Can form a supercomplex with the [NiFe] hydrogenase HynA1 and the tetraheme Type I cytochrome c3 TpIc(3), its physiological electron donors. Requires There is no molybdenum or tungsten pterin cofactor present in the Qrc complex, despite the similarity of QrcB to molybdopterin-containing oxidoreductases. as cofactor. In terms of processing, predicted to be exported by the Tat system. The position of the signal peptide cleavage has not been experimentally proven.

The protein resides in the periplasm. Functionally, component of the respiratory Qrc complex, that catalyzes the reduction of the menaquinone pool using electrons transferred from the reduced periplasmic cytochrome c3, and which is probably involved in sulfate respiration. Is likely essential for growth on H(2) or formate since the periplasmic hydrogenases and/or formate dehydrogenases act as primary electron donors for the Qrc complex. The function of the QrcB subunit is unknown; in the absence of a catalytic site, it may provide a structural scaffold for the other subunits. The sequence is that of Menaquinone reductase, molybdopterin-binding-like subunit from Nitratidesulfovibrio vulgaris (strain ATCC 29579 / DSM 644 / CCUG 34227 / NCIMB 8303 / VKM B-1760 / Hildenborough) (Desulfovibrio vulgaris).